An 89-amino-acid chain; its full sequence is Small ribosomal subunit protein bS20 (89 aa).

The disordered stretch occupies residues 1-26 (MANSPQAKKRARQNEKNRKHNASLRS). Positions 7–22 (AKKRARQNEKNRKHNA) are enriched in basic residues.

This sequence belongs to the bacterial ribosomal protein bS20 family.

Binds directly to 16S ribosomal RNA. The chain is Small ribosomal subunit protein bS20 from Marinobacter nauticus (strain ATCC 700491 / DSM 11845 / VT8) (Marinobacter aquaeolei).